The primary structure comprises 479 residues: Aspartyl/glutamyl-tRNA(Asn/Gln) amidotransferase subunit B (479 aa).

This sequence belongs to the GatB/GatE family. GatB subfamily. In terms of assembly, heterotrimer of A, B and C subunits.

The enzyme catalyses L-glutamyl-tRNA(Gln) + L-glutamine + ATP + H2O = L-glutaminyl-tRNA(Gln) + L-glutamate + ADP + phosphate + H(+). It catalyses the reaction L-aspartyl-tRNA(Asn) + L-glutamine + ATP + H2O = L-asparaginyl-tRNA(Asn) + L-glutamate + ADP + phosphate + 2 H(+). Allows the formation of correctly charged Asn-tRNA(Asn) or Gln-tRNA(Gln) through the transamidation of misacylated Asp-tRNA(Asn) or Glu-tRNA(Gln) in organisms which lack either or both of asparaginyl-tRNA or glutaminyl-tRNA synthetases. The reaction takes place in the presence of glutamine and ATP through an activated phospho-Asp-tRNA(Asn) or phospho-Glu-tRNA(Gln). This Streptococcus pyogenes serotype M12 (strain MGAS2096) protein is Aspartyl/glutamyl-tRNA(Asn/Gln) amidotransferase subunit B.